An 81-amino-acid chain; its full sequence is MDPLISAASVIAAGLSVGLASIGPGVGQGTAAGQAVEGIARQPEAEGKIRGTLLLSLAFMEALTIYGLVVALALLFANPFV.

Helical transmembrane passes span 3-23 and 57-77; these read PLIS…ASIG and LAFM…LLFA.

The protein belongs to the ATPase C chain family. In terms of assembly, F-type ATPases have 2 components, F(1) - the catalytic core - and F(0) - the membrane proton channel. F(1) has five subunits: alpha(3), beta(3), gamma(1), delta(1), epsilon(1). F(0) has four main subunits: a(1), b(1), b'(1) and c(10-14). The alpha and beta chains form an alternating ring which encloses part of the gamma chain. F(1) is attached to F(0) by a central stalk formed by the gamma and epsilon chains, while a peripheral stalk is formed by the delta, b and b' chains.

It is found in the plastid. The protein resides in the chloroplast thylakoid membrane. In terms of biological role, f(1)F(0) ATP synthase produces ATP from ADP in the presence of a proton or sodium gradient. F-type ATPases consist of two structural domains, F(1) containing the extramembraneous catalytic core and F(0) containing the membrane proton channel, linked together by a central stalk and a peripheral stalk. During catalysis, ATP synthesis in the catalytic domain of F(1) is coupled via a rotary mechanism of the central stalk subunits to proton translocation. Functionally, key component of the F(0) channel; it plays a direct role in translocation across the membrane. A homomeric c-ring of between 10-14 subunits forms the central stalk rotor element with the F(1) delta and epsilon subunits. This Pinus koraiensis (Korean pine) protein is ATP synthase subunit c, chloroplastic.